The following is a 241-amino-acid chain: GTP cyclohydrolase 1 (241 aa).

The propeptide occupies 1 to 11; that stretch reads MEKPRGVRCTN. The segment at 1 to 58 is disordered; the sequence is MEKPRGVRCTNGFPERELPRPGASRPAEKSRPPEAKGAQPADAWKAGRPRSEEDNELN. Residues Ser51 and Ser72 each carry the phosphoserine modification. Cys132, His135, and Cys203 together coordinate Zn(2+).

Belongs to the GTP cyclohydrolase I family. In terms of assembly, toroid-shaped homodecamer, composed of two pentamers of five dimers. Interacts with AHSA1 and GCHFR/GFRP. In terms of processing, phosphorylated.

Its subcellular location is the cytoplasm. The protein resides in the nucleus. The enzyme catalyses GTP + H2O = 7,8-dihydroneopterin 3'-triphosphate + formate + H(+). The protein operates within cofactor biosynthesis; 7,8-dihydroneopterin triphosphate biosynthesis; 7,8-dihydroneopterin triphosphate from GTP: step 1/1. With respect to regulation, GTP shows a positive allosteric effect, and tetrahydrobiopterin inhibits the enzyme activity. Zinc is required for catalytic activity. Inhibited by Mg(2+). Functionally, may positively regulate nitric oxide synthesis in endothelial cells. May be involved in dopamine synthesis. May modify pain sensitivity and persistence. This is GTP cyclohydrolase 1 (Gch1) from Rattus norvegicus (Rat).